A 641-amino-acid chain; its full sequence is Protein zwilch (641 aa).

Ser-312 carries the phosphoserine modification.

Belongs to the ZWILCH family. Component of the RZZ complex composed of rod, Zw10 and Zwilch.

It is found in the cytoplasm. It localises to the chromosome. The protein resides in the centromere. The protein localises to the kinetochore. Its subcellular location is the cytoskeleton. It is found in the spindle. Essential component of the mitotic checkpoint, which prevents cells from prematurely exiting mitosis. Required for the assembly of the dynein-dynactin, Mad2 complexes and spindly/CG15415 onto kinetochores. Its function related to the spindle assembly machinery is proposed to depend on its association in the RZZ complex. Failure to assemble the complex due to the absence of any one of its components, results in the incorrect redistribution of the remaining components to diverse membrane compartments. The polypeptide is Protein zwilch (Drosophila melanogaster (Fruit fly)).